Consider the following 167-residue polypeptide: MTKSSFTFFFQEYCEKHNLTNEEIQERFAILQYQAEVERDTTQDHQQLSAIFAKWRENCPRKQANNDETTSQYTGAEHQAIRDLFASLKQSAREAHSLHHQSHQSDVQVHAKGNPSRVLEAPAVTEVDKAVLAYLEAFFASDRSSSEILKLSNRLFNLGQAYNKTAK.

Residues 95 to 114 (AHSLHHQSHQSDVQVHAKGN) form a disordered region.

This is an uncharacterized protein from Haemophilus influenzae (Bacteriophage HP1).